Here is a 208-residue protein sequence, read N- to C-terminus: 3-isopropylmalate dehydratase small subunit (208 aa).

This sequence belongs to the LeuD family. LeuD type 1 subfamily. As to quaternary structure, heterodimer of LeuC and LeuD.

It catalyses the reaction (2R,3S)-3-isopropylmalate = (2S)-2-isopropylmalate. The protein operates within amino-acid biosynthesis; L-leucine biosynthesis; L-leucine from 3-methyl-2-oxobutanoate: step 2/4. Its function is as follows. Catalyzes the isomerization between 2-isopropylmalate and 3-isopropylmalate, via the formation of 2-isopropylmaleate. This Granulibacter bethesdensis (strain ATCC BAA-1260 / CGDNIH1) protein is 3-isopropylmalate dehydratase small subunit.